The sequence spans 205 residues: Endothelial cell-specific chemotaxis regulator (205 aa).

The first 24 residues, M1–S24, serve as a signal peptide directing secretion. Topologically, residues Q25 to A124 are extracellular. Composition is skewed to polar residues over residues S49 to T71 and S86 to S101. The tract at residues S49–S101 is disordered. A helical membrane pass occupies residues F125–V145. The Cytoplasmic segment spans residues S146–L205. Residues K153–A175 form a disordered region. Residues P163–A175 show a composition bias toward polar residues. At S198 the chain carries Phosphoserine.

Belongs to the ECSCR family. As to quaternary structure, interacts with FLNA. Interacts with the 20S proteasome subunit PSMA7. In terms of processing, may be heavily O-glycosylated. Highest expression in endothelial cells. Also detected in vascular smooth muscle, macrophages, lymphocytes, and mast cells.

Its subcellular location is the cell membrane. The protein localises to the cytoplasm. Functionally, regulates endothelial chemotaxis and tube formation. Has a role in angiogenesis and apoptosis via modulation of the actin cytoskeleton and facilitation of proteasomal degradation of the apoptosis inhibitors BIRC3/IAP1 and BIRC2/IAP2. This chain is Endothelial cell-specific chemotaxis regulator (ECSCR), found in Homo sapiens (Human).